We begin with the raw amino-acid sequence, 506 residues long: Maturase K (506 aa).

It belongs to the intron maturase 2 family. MatK subfamily.

The protein resides in the plastid. It localises to the chloroplast. Its function is as follows. Usually encoded in the trnK tRNA gene intron. Probably assists in splicing its own and other chloroplast group II introns. The sequence is that of Maturase K from Lathyrus tingitanus (Tangier pea).